The chain runs to 113 residues: Hydrogenase maturation factor HypA (113 aa).

Ni(2+) is bound at residue H2. Positions 73, 76, 89, and 92 each coordinate Zn(2+).

This sequence belongs to the HypA/HybF family.

Functionally, involved in the maturation of [NiFe] hydrogenases. Required for nickel insertion into the metal center of the hydrogenase. In Alkalilimnicola ehrlichii (strain ATCC BAA-1101 / DSM 17681 / MLHE-1), this protein is Hydrogenase maturation factor HypA.